The sequence spans 289 residues: Ribosomal protein L11 methyltransferase (289 aa).

Thr-142, Gly-163, Asp-185, and Asn-226 together coordinate S-adenosyl-L-methionine.

Belongs to the methyltransferase superfamily. PrmA family.

The protein localises to the cytoplasm. The enzyme catalyses L-lysyl-[protein] + 3 S-adenosyl-L-methionine = N(6),N(6),N(6)-trimethyl-L-lysyl-[protein] + 3 S-adenosyl-L-homocysteine + 3 H(+). Its function is as follows. Methylates ribosomal protein L11. In Legionella pneumophila (strain Paris), this protein is Ribosomal protein L11 methyltransferase.